Reading from the N-terminus, the 464-residue chain is Na(+)/H(+) antiporter NhaA (464 aa).

The next 12 helical transmembrane spans lie at 37–57 (GSGILLVFLTIVALVFANTSC), 82–102 (IHYWINDALMTLFFLMVGLEI), 118–138 (VLPIFAALGGMIVPALIYFSF), 145–165 (VSGWGIPMATDIAFAIAILLL), 176–196 (AVLVALAIVDDLGAVIVIAIF), 200–220 (NLAWSPLIAAFLCFAVLLLLN), 226–246 (ALWAYIAIGSLMWVFMLFSGV), 248–268 (ATVAGVLTALATPMNAVYSPT), 321–341 (ILNTPVYFLIVPLFVLFNAGV), 360–380 (VFFGLVFGKLIGVVSAIMICV), 396–416 (VLGIGMLAGIGFTMSIFVSEL), and 430–450 (ITILAASLTAATLGYCWLRFI).

It belongs to the NhaA Na(+)/H(+) (TC 2.A.33) antiporter family.

Its subcellular location is the cell inner membrane. It carries out the reaction Na(+)(in) + 2 H(+)(out) = Na(+)(out) + 2 H(+)(in). Its function is as follows. Na(+)/H(+) antiporter that extrudes sodium in exchange for external protons. This chain is Na(+)/H(+) antiporter NhaA, found in Dichelobacter nodosus (strain VCS1703A).